A 252-amino-acid polypeptide reads, in one-letter code: Ribosomal RNA small subunit methyltransferase J (252 aa).

Residues 104-105, 120-121, 156-157, and D174 contribute to the S-adenosyl-L-methionine site; these read RD, ER, and SS.

This sequence belongs to the methyltransferase superfamily. RsmJ family.

It is found in the cytoplasm. The enzyme catalyses guanosine(1516) in 16S rRNA + S-adenosyl-L-methionine = N(2)-methylguanosine(1516) in 16S rRNA + S-adenosyl-L-homocysteine + H(+). Specifically methylates the guanosine in position 1516 of 16S rRNA. This Yersinia enterocolitica serotype O:8 / biotype 1B (strain NCTC 13174 / 8081) protein is Ribosomal RNA small subunit methyltransferase J.